The chain runs to 245 residues: 3-dehydroquinate dehydratase (245 aa).

Residues 35 to 37 (EFR) and Arg70 contribute to the 3-dehydroquinate site. The Proton donor/acceptor role is filled by His132. Lys158 functions as the Schiff-base intermediate with substrate in the catalytic mechanism. 3 residues coordinate 3-dehydroquinate: Arg199, Thr220, and Gln224.

The protein belongs to the type-I 3-dehydroquinase family. Homodimer.

The catalysed reaction is 3-dehydroquinate = 3-dehydroshikimate + H2O. Its pathway is metabolic intermediate biosynthesis; chorismate biosynthesis; chorismate from D-erythrose 4-phosphate and phosphoenolpyruvate: step 3/7. Its function is as follows. Involved in the third step of the chorismate pathway, which leads to the biosynthesis of aromatic amino acids. Catalyzes the cis-dehydration of 3-dehydroquinate (DHQ) and introduces the first double bond of the aromatic ring to yield 3-dehydroshikimate. This is 3-dehydroquinate dehydratase from Haloquadratum walsbyi (strain DSM 16790 / HBSQ001).